The sequence spans 219 residues: Protein Ac132 (219 aa).

Positions 1–34 are disordered; it reads MSDKTPTKKGGSHAMTLRERGVTKPPKKSEKLQQ. The segment covering 16-33 has biased composition (basic and acidic residues); that stretch reads TLRERGVTKPPKKSEKLQ. Residues 103–134 form an NEBU-like domain region; it reads YPMAYFVNTDYKLKLECARIRSDLLYKNKNEV.

As to quaternary structure, interacts with viral envelope protein E18 and the DNA-binding protein p6.9.

It localises to the host cytoplasm. The protein localises to the host nucleus. Its subcellular location is the virion. Functionally, plays an essential role in nucleocapsid entry in host nucleus. May act by binding and stabilizing F-actin in the infected cell, which might attach to nucleocapsids and then push the nucleocapsids into the nucleus. This Autographa californica nuclear polyhedrosis virus (AcMNPV) protein is Protein Ac132 (Ac132).